The chain runs to 487 residues: L-carnitine dehydrogenase/betainyl-CoA thioesterase (487 aa).

An L-carnitine dehydrogenase region spans residues 1-327 (MTTAAIIGGG…DAALKPKALP (327 aa)). 8–13 (GGGVIG) is an NAD(+) binding site. Residues 328–487 (DLDTADLTQP…GAGSAIRKPA (160 aa)) are betainyl-CoA thioesterase.

This sequence in the N-terminal section; belongs to the 3-hydroxyacyl-CoA dehydrogenase family. L-carnitine dehydrogenase subfamily. In the C-terminal section; belongs to the betainyl-CoA thioesterase family. Homodimer.

It localises to the cytoplasm. It catalyses the reaction carnitine + NAD(+) = 3-dehydrocarnitine + NADH + H(+). The enzyme catalyses N,N,N-trimethylglycyl-CoA + H2O = glycine betaine + CoA + H(+). Its pathway is amine and polyamine metabolism; carnitine metabolism. Functionally, multifunctional enzyme that catalyzes the NAD(+)-dependent oxidation of L-carnitine to 3-dehydrocarnitine and the cleavage of betainyl-CoA (N,N,N-trimethylglycyl-CoA) into glycine betaine and coenzyme A. The protein is L-carnitine dehydrogenase/betainyl-CoA thioesterase of Ruegeria pomeroyi (strain ATCC 700808 / DSM 15171 / DSS-3) (Silicibacter pomeroyi).